The chain runs to 122 residues: Double-headed protease inhibitor, submandibular gland (122 aa).

2 Kazal-like domains span residues 10–70 (GGRK…KCDI) and 71–121 (ECPQ…QCQS). 6 disulfide bridges follow: Cys16-Cys50, Cys28-Cys47, Cys36-Cys68, Cys72-Cys101, Cys79-Cys98, and Cys87-Cys119.

Its subcellular location is the secreted. Functionally, this inhibitor is composed of two homologous actively inhibiting halves: one which inhibits trypsin, the other which inhibits elastase. This Mustela lutreola (European mink) protein is Double-headed protease inhibitor, submandibular gland.